Reading from the N-terminus, the 103-residue chain is N(4)-acetylcytidine amidohydrolase (103 aa).

The 96-residue stretch at 6-101 folds into the ASCH domain; sequence ITFSQRFQDD…QTQFYVIEFK (96 aa). Lys21 (proton acceptor) is an active-site residue. Catalysis depends on Thr24, which acts as the Nucleophile. Residue Glu74 is the Proton donor of the active site.

The protein belongs to the N(4)-acetylcytidine amidohydrolase family.

It catalyses the reaction N(4)-acetylcytidine + H2O = cytidine + acetate + H(+). The catalysed reaction is N(4)-acetyl-2'-deoxycytidine + H2O = 2'-deoxycytidine + acetate + H(+). The enzyme catalyses N(4)-acetylcytosine + H2O = cytosine + acetate + H(+). Its function is as follows. Catalyzes the hydrolysis of N(4)-acetylcytidine (ac4C). In Shigella boydii serotype 4 (strain Sb227), this protein is N(4)-acetylcytidine amidohydrolase (yqfB).